The sequence spans 133 residues: Serine/threonine-protein kinase RsbT (133 aa).

It catalyses the reaction L-seryl-[protein] + ATP = O-phospho-L-seryl-[protein] + ADP + H(+). The catalysed reaction is L-threonyl-[protein] + ATP = O-phospho-L-threonyl-[protein] + ADP + H(+). In terms of biological role, provides the crucial link between the upstream module (communication of environmental stress) and the downstream module (integration of the environmental signals with signals of energy stress) that compose the signal transduction pathway controlling the sigma-B factor. Phosphorylates and inactivates its specific antagonist protein RsbS thanks to its serine kinase activity. Upon phosphorylation of RsbS, RsbT is released to stimulate RsbU, a PP2C phosphatase, thereby initiating the signaling cascade that ultimately activates sigma-B. The activity of the RsbU phosphatase may be stimulated by a long-lived interaction with RsbT and the serine kinase function of RsbT is not required to directly modify RsbU. Also phosphorylates RsbR thanks to its threonine kinase activity, preventing it to phosphorylate RsbT. This is Serine/threonine-protein kinase RsbT (rsbT) from Bacillus subtilis (strain 168).